The chain runs to 71 residues: UPF0352 protein VCM66_1964 (71 aa).

Belongs to the UPF0352 family.

The chain is UPF0352 protein VCM66_1964 from Vibrio cholerae serotype O1 (strain M66-2).